We begin with the raw amino-acid sequence, 519 residues long: Xylose import ATP-binding protein XylG (519 aa).

ABC transporter domains lie at 6-245 (LTMR…VGRE) and 262-507 (LEAR…LTPA). 38–45 (GENGAGKS) contributes to the ATP binding site.

It belongs to the ABC transporter superfamily. Xylose importer (TC 3.A.1.2.4) family. As to quaternary structure, the complex is composed of two ATP-binding proteins (XylG), two transmembrane proteins (XylH) and a solute-binding protein (XylF).

The protein localises to the cell inner membrane. The catalysed reaction is D-xylose(out) + ATP + H2O = D-xylose(in) + ADP + phosphate + H(+). Functionally, part of the ABC transporter complex XylFGH involved in xylose import. Responsible for energy coupling to the transport system. In Burkholderia ambifaria (strain ATCC BAA-244 / DSM 16087 / CCUG 44356 / LMG 19182 / AMMD) (Burkholderia cepacia (strain AMMD)), this protein is Xylose import ATP-binding protein XylG.